The sequence spans 219 residues: Ribose-5-phosphate isomerase A (219 aa).

Residues 28-31 (TGST), 81-84 (DGAD), and 94-97 (KGGG) contribute to the substrate site. Catalysis depends on Glu-103, which acts as the Proton acceptor. Residue Lys-121 coordinates substrate.

It belongs to the ribose 5-phosphate isomerase family. Homodimer.

The catalysed reaction is aldehydo-D-ribose 5-phosphate = D-ribulose 5-phosphate. It functions in the pathway carbohydrate degradation; pentose phosphate pathway; D-ribose 5-phosphate from D-ribulose 5-phosphate (non-oxidative stage): step 1/1. Catalyzes the reversible conversion of ribose-5-phosphate to ribulose 5-phosphate. This chain is Ribose-5-phosphate isomerase A, found in Shewanella oneidensis (strain ATCC 700550 / JCM 31522 / CIP 106686 / LMG 19005 / NCIMB 14063 / MR-1).